A 31-amino-acid polypeptide reads, in one-letter code: Cyclotide psybry C (31 aa).

The segment at residues 1 to 31 (GFNPCGETCQIDQTCHAPGCTCSIANICVRN) is a cross-link (cyclopeptide (Gly-Asn)). 3 cysteine pairs are disulfide-bonded: cysteine 5–cysteine 20, cysteine 9–cysteine 22, and cysteine 15–cysteine 28.

This is a cyclic peptide.

Its function is as follows. Probably participates in a plant defense mechanism. This Psychotria brachyceras protein is Cyclotide psybry C.